We begin with the raw amino-acid sequence, 359 residues long: Mitochondrial glutathione transporter SLC25A39 (359 aa).

Residues 1-14 (MDDQDPGGISPLQQ) are Mitochondrial intermembrane-facing. Solcar repeat units lie at residues 9–151 (ISPL…LKAF), 159–243 (SDLY…VKSQ), and 253–347 (TSVG…GKSF). A helical membrane pass occupies residues 15-35 (MVASGAGAVVTSLFMTPLDVV). Topologically, residues 36–121 (KVRLQSQRPT…VKIVRHEGTR (86 aa)) are mitochondrial matrix. [2Fe-2S] cluster contacts are provided by C74, C78, C88, and C94. Residues 122-142 (TLWSGLPATLVMTVPATAIYF) form a helical membrane-spanning segment. Residues 143 to 164 (TAYDQLKAFLCGQSLTSDLYAP) lie on the Mitochondrial intermembrane side of the membrane. Residues 165 to 185 (MVAGALARMGTVTVVSPLELV) form a helical membrane-spanning segment. Residues 186–214 (RTKLQAQHVSYRELAACVQAAVAQGGWRS) are Mitochondrial matrix-facing. Residues 215–235 (LWLGWGPTALRDVPFSALYWF) traverse the membrane as a helical segment. Over 236–255 (NYELVKSQLNGPRQKEQTSV) the chain is Mitochondrial intermembrane. A helical transmembrane segment spans residues 256–276 (GISFVAGGISGMVAATLTLPF). At 277 to 317 (DVVKTQRQMSLGAVEAMRVKPPRVDSTWLLLRRIQAESGTR) the chain is on the mitochondrial matrix side. Residues 318–338 (GLFAGFLPRIIKAAPSCAIMI) traverse the membrane as a helical segment. At 339–359 (STYEFGKSFFHRLNQEQPLGH) the chain is on the mitochondrial intermembrane side.

This sequence belongs to the mitochondrial carrier (TC 2.A.29) family. Post-translationally, cleaved and degraded by AFG3L2; degradation by AFG3L2 is regulated by the ability of SLC25A39 to bind iron-sulfur. In absence of mitochondrial glutathione, SLC25A39 binds iron-sulfur, preventing cleavage and degradation by AFG3L2. The presence of mitochondrial glutathione prevents iron-sulfur-binding to SLC25A39, promoting cleavage and degradation by AFG3L2.

The protein localises to the mitochondrion inner membrane. It carries out the reaction glutathione(in) = glutathione(out). The activity of SLC25A39 is regulated by levels of mitochondrial glutathione via its ability to bind [2Fe-2S] iron-sulfur cluster. Upon physiological levels of mitochondrial glutathione, glutathione prevents iron-sulfur-binding to SLC25A39 promoting cleavage and degradation by AFG3L2. Upon depletion of mitochondrial glutathione, SLC25A39 binds iron-sulfur, preventing cleavage and degradation by AFG3L2. Its function is as follows. Mitochondrial transporter required for glutathione import into mitochondria. Glutathione, which plays key roles in oxidative metabolism, is produced exclusively in the cytosol and is imported in many organelles. Mitochondrial glutathione is required for the activity and stability of proteins containing iron-sulfur clusters, as well as erythropoiesis. In Rattus norvegicus (Rat), this protein is Mitochondrial glutathione transporter SLC25A39 (Slc25a39).